The following is a 263-amino-acid chain: uncharacterized protein (263 aa).

A signal peptide spans 1–22 (MEYLKRLALFISVIILTIFIMG). C23 carries N-palmitoyl cysteine lipidation. A lipid anchor (S-diacylglycerol cysteine) is attached at C23.

This sequence belongs to the staphylococcal tandem lipoprotein family.

The protein resides in the cell membrane. This is an uncharacterized protein from Staphylococcus aureus (strain MSSA476).